The chain runs to 1026 residues: MPSMLVLVGTMPSLASLVSLGGACASVSGTSSSDASYALVKRVSLSRRSVKGTKKWLCRYSVSSSTTTTTADFIADQNNNSVSIDSNSFRGSKDGDDSEVVLKQTPKPVLKPPVARVERGLGVNTAPWSKDLSNGGKFDGEEERNKVIESLGEVLDKAEKLEIPKPGNKEGGEAVKPSQPSANSSNSRNGSYANASDGGTRKTKTMKSVWRKGDAVAAVQKVVKESPKIFNRGVQTEPRTREEGEVNAKAGTPLAPPQPPFRPQPPVRPQPMLQGKPMVAPPVKKSPILKDLGMAAKPLVSEEVDSSVKSKERKPILVDKFASKKKGVDPAASQAVLAPTKPGKGPPSNKFRVEHRNKKNASASPRRRIVAEDDGDDDASISRSGRKGRKWSKASRKAVRLQAAKDAAPVKAEILEVEEEGMSIEDLAYNLAIGEGDILGYLYSKGIRPDGVHTLDREMVKMICRDYDVEVLDADSVKVEEMAKKRQTFDEEDLDKLEDRPPVITIMGHVDHGKTTLLDYIRKSKVAASEAGGITQGIGAYKVSVPVDGKLQSCVFLDTPGHEAFGAMRARGARVTDIAIIVVAADDGIRPQTNEAIAHAKAAAVPIVIAINKIDKEGASPDRVMQELSSIGLMPEDWGGDVPMVQISALKGENVDDLLETVMLVAELQELKANPHRNAKGIVIEAGLDKAKGPFATFIVQKGTLKRGDVVVCGEAFGKVRALFDHSGERVDEAGPSIPVQVIGLNNVPIAGDEFEIVSSLDVAREMAEARAVSLRDERISAKAGDGKVTLSSLASAVSAKKMSGLDLHQLNIILKVDVQGSIEAVRQALQVLPQENVTLKFLLQATGDVSNSDVDLASASEAIVFGFNVKASGSVKKAAENKGVEIRLYRVIYELIDDVRNAMEGLLESVEEQIPIGSAEVRATFSSGSGRVAGCMVNEGKFVKDCGIRVVRKGKTVHVGVLDSLKRVKENVKEVSAGLECGIGMDDYDDWIEGDIIEAFNAVQKRRTLEEASASMSAAIEEAGV.

The N-terminal 63 residues, 1–63 (MPSMLVLVGT…KKWLCRYSVS (63 aa)), are a transit peptide targeting the chloroplast. The span at 158 to 173 (AEKLEIPKPGNKEGGE) shows a compositional bias: basic and acidic residues. Disordered stretches follow at residues 158-208 (AEKL…TMKS), 230-284 (FNRG…PPVK), and 300-393 (VSEE…KWSK). The segment covering 178–194 (SQPSANSSNSRNGSYAN) has biased composition (polar residues). A compositionally biased stretch (pro residues) spans 254 to 269 (LAPPQPPFRPQPPVRP). Residues 306–317 (SSVKSKERKPIL) are compositionally biased toward basic and acidic residues. The span at 384–393 (SGRKGRKWSK) shows a compositional bias: basic residues. The region spanning 499–672 (DRPPVITIMG…MLVAELQELK (174 aa)) is the tr-type G domain. The segment at 508–515 (GHVDHGKT) is G1. 508–515 (GHVDHGKT) contributes to the GTP binding site. Residues 533 to 537 (GITQG) are G2. The segment at 558–561 (DTPG) is G3. Residues 558 to 562 (DTPGH) and 612 to 615 (NKID) each bind GTP. The interval 612-615 (NKID) is G4. The G5 stretch occupies residues 648 to 650 (SAL).

This sequence belongs to the TRAFAC class translation factor GTPase superfamily. Classic translation factor GTPase family. IF-2 subfamily.

The protein resides in the plastid. Its subcellular location is the chloroplast. One of the essential components for the initiation of protein synthesis. Protects formylmethionyl-tRNA from spontaneous hydrolysis and promotes its binding to the 30S ribosomal subunits. Also involved in the hydrolysis of GTP during the formation of the 70S ribosomal complex. The sequence is that of Translation initiation factor IF-2, chloroplastic from Arabidopsis thaliana (Mouse-ear cress).